A 283-amino-acid polypeptide reads, in one-letter code: Pantothenate synthetase (283 aa).

30–37 (MGYLHEGH) serves as a coordination point for ATP. Catalysis depends on His37, which acts as the Proton donor. Position 61 (Gln61) interacts with (R)-pantoate. Gln61 provides a ligand contact to beta-alanine. 147-150 (GQKD) is an ATP binding site. Gln153 contacts (R)-pantoate. ATP is bound by residues Val176 and 184 to 187 (MSSR).

It belongs to the pantothenate synthetase family. As to quaternary structure, homodimer.

It is found in the cytoplasm. It carries out the reaction (R)-pantoate + beta-alanine + ATP = (R)-pantothenate + AMP + diphosphate + H(+). Its pathway is cofactor biosynthesis; (R)-pantothenate biosynthesis; (R)-pantothenate from (R)-pantoate and beta-alanine: step 1/1. Functionally, catalyzes the condensation of pantoate with beta-alanine in an ATP-dependent reaction via a pantoyl-adenylate intermediate. This chain is Pantothenate synthetase, found in Thermoanaerobacter pseudethanolicus (strain ATCC 33223 / 39E) (Clostridium thermohydrosulfuricum).